Here is a 110-residue protein sequence, read N- to C-terminus: Nucleoid-associated protein Mkms_4993 (110 aa).

It belongs to the YbaB/EbfC family. As to quaternary structure, homodimer.

The protein localises to the cytoplasm. It localises to the nucleoid. Functionally, binds to DNA and alters its conformation. May be involved in regulation of gene expression, nucleoid organization and DNA protection. The chain is Nucleoid-associated protein Mkms_4993 from Mycobacterium sp. (strain KMS).